The following is a 905-amino-acid chain: MCRKQPFLLPTLLGILAALMLQQGPVEAFGGSRLCKTGFLEDVYHASVYRSVHEGQPLLNVMFTDCGTDRRIQYETSNPTDFRIDGDGIVFASRTFDISPEQAEFLVYAQDEDTRELWHVTVKITLRPPHEHHSHQGFHKVREIKFSTQRNSNGLQRQKRDWVIPPINVPENARGTFPQELVRIRSDRDKNLSLRYSVTGPGADQPPIGVFIINPIGGQLSVTKPLDREQIANFHLRAHAVDVNGNQVENPIDIVINVIDMNDNRPEFLHQIWNGSIPEGSKPGTYVMTVTAIDGDDPKQPNGMLRYKILSQTPAISSPNMFTINNETGDIITLAAGLDREKVQRYTLIIQATDMEGNPTYGLSNTATAVIAVTDVNDNPPEFTAMTFYGEVPENRVDVVVANLTVTDKDQPHTPAWNAVYRIVGGDGTGRFAIKTDANSNDGLVTVVKPIDYETKSTYILTVVAENQVDLIRGIQFKPESTATVSVTVIDVNENPYFTPNPKLIRQEEGLFASKMLTTFSAQDPDRYMQQTIRYSKLSDPANWLKIDPVNGLITTTAVLDRESMYVKNNMYNATFLATDSGIPPMSGTGTLQIYLLDINDNAPYVYPQEVEICERPDPNAINITALDADINPNSGPFIFELPYSPMDIKNWTVTRLSGDHAQLSLKIGSLDYGIYNIPIHITDSGNPAMSNTSYLRVKVCSCEHEYCSTTAPIIGTGLGTGAIIAILLCIIILLTLVLMFVVWMKRRDKERQAKQLLIDPEDDVRDNILKYDEEGGGEEDQDYDLSQLQQPDTMEPDTIKPVGIRRMDERPIHAEPQYPIRSAAPHPGDIGDFINEGLKAADNDPTAPPYDSLLVFDYEGSGSTAGSLSSLNSSSSGGEQDYDYLNDWGPRFKKLADMYGGSDD.

Residues 1 to 28 form the signal peptide; that stretch reads MCRKQPFLLPTLLGILAALMLQQGPVEA. Positions 29 to 160 are excised as a propeptide; sequence FGGSRLCKTG…NSNGLQRQKR (132 aa). Cadherin domains are found at residues 161–268, 269–383, 384–498, 499–604, and 605–713; these read DWVI…RPEF, LHQI…PPEF, TAMT…NPYF, TPNP…DNAP, and YVYP…TTAP. Residues 161-723 are Extracellular-facing; that stretch reads DWVIPPINVP…IIGTGLGTGA (563 aa). Residue E171 coordinates Ca(2+). N191 carries N-linked (GlcNAc...) asparagine glycosylation. Ca(2+)-binding residues include D227, E229, D260, M261, N262, D263, and N264. N274 carries an N-linked (GlcNAc...) asparagine glycan. 3 residues coordinate Ca(2+): D294, D296, and N302. An N-linked (GlcNAc...) asparagine glycan is attached at N326. D354 contacts Ca(2+). N-linked (GlcNAc...) asparagine glycans are attached at residues N403, N573, N623, N651, and N692. The chain crosses the membrane as a helical span at residues 724-745; the sequence is IIAILLCIIILLTLVLMFVVWM. At 746–905 the chain is on the cytoplasmic side; it reads KRRDKERQAK…LADMYGGSDD (160 aa). Disordered regions lie at residues 774-800 and 862-883; these read EEGG…PDTI and SGST…EQDY. A compositionally biased stretch (acidic residues) spans 775–784; that stretch reads EGGGEEDQDY. Low complexity predominate over residues 862 to 879; it reads SGSTAGSLSSLNSSSSGG.

In terms of assembly, homodimer (via extracellular region). Can also form heterodimers with other cadherins (via extracellular region). Dimerization occurs in trans, i.e. with a cadherin chain from another cell.

The protein resides in the cell membrane. It is found in the sarcolemma. Its subcellular location is the cell junction. It localises to the cell surface. The protein localises to the desmosome. The protein resides in the adherens junction. Functionally, calcium-dependent cell adhesion protein; preferentially mediates homotypic cell-cell adhesion. Cadherins may thus contribute to the sorting of heterogeneous cell types, and thereby play an important role during embryonic development. Required for proper neurite branching. Required for pre- and postsynaptic organization. This chain is Cadherin-2B (cdh2-b), found in Xenopus laevis (African clawed frog).